The sequence spans 129 residues: Small ribosomal subunit protein uS11 (129 aa).

It belongs to the universal ribosomal protein uS11 family. Part of the 30S ribosomal subunit. Interacts with proteins S7 and S18. Binds to IF-3.

Functionally, located on the platform of the 30S subunit, it bridges several disparate RNA helices of the 16S rRNA. Forms part of the Shine-Dalgarno cleft in the 70S ribosome. This chain is Small ribosomal subunit protein uS11, found in Salmonella newport (strain SL254).